A 143-amino-acid chain; its full sequence is Ribonuclease HI (143 aa).

Residues 1–136 (MQEIEIFCDG…CDSLAKLEAQ (136 aa)) form the RNase H type-1 domain. 4 residues coordinate Mg(2+): Asp9, Glu47, Asp69, and Asp128.

This sequence belongs to the RNase H family. In terms of assembly, monomer. It depends on Mg(2+) as a cofactor.

It localises to the cytoplasm. It catalyses the reaction Endonucleolytic cleavage to 5'-phosphomonoester.. Functionally, endonuclease that specifically degrades the RNA of RNA-DNA hybrids. This Helicobacter pylori (strain ATCC 700392 / 26695) (Campylobacter pylori) protein is Ribonuclease HI (rnhA).